A 346-amino-acid polypeptide reads, in one-letter code: Putative agmatine deiminase (346 aa).

C333 serves as the catalytic Amidino-cysteine intermediate.

The protein belongs to the agmatine deiminase family.

The catalysed reaction is agmatine + H2O = N-carbamoylputrescine + NH4(+). This chain is Putative agmatine deiminase, found in Legionella pneumophila (strain Paris).